The following is a 203-amino-acid chain: Ribosomal RNA large subunit methyltransferase E (203 aa).

The S-adenosyl-L-methionine site is built by Gly59, Trp61, Asp79, Asp97, and Asp119. The active-site Proton acceptor is Lys159.

The protein belongs to the class I-like SAM-binding methyltransferase superfamily. RNA methyltransferase RlmE family.

The protein resides in the cytoplasm. It carries out the reaction uridine(2552) in 23S rRNA + S-adenosyl-L-methionine = 2'-O-methyluridine(2552) in 23S rRNA + S-adenosyl-L-homocysteine + H(+). Its function is as follows. Specifically methylates the uridine in position 2552 of 23S rRNA at the 2'-O position of the ribose in the fully assembled 50S ribosomal subunit. This Desulforapulum autotrophicum (strain ATCC 43914 / DSM 3382 / VKM B-1955 / HRM2) (Desulfobacterium autotrophicum) protein is Ribosomal RNA large subunit methyltransferase E.